The sequence spans 608 residues: Threonine--tRNA ligase (608 aa).

Positions 1–145 are editing domain; sequence MKTLLIHAKH…TIKPGRRVRP (145 aa). Catalytic regions lie at residues 192–489 and 193–489; these read PKYL…PSLP and KYLE…PSLP. Residues cysteine 286, histidine 337, and histidine 458 each coordinate Zn(2+).

It belongs to the class-II aminoacyl-tRNA synthetase family. Homodimer. Requires Zn(2+) as cofactor.

Its subcellular location is the cytoplasm. The catalysed reaction is tRNA(Thr) + L-threonine + ATP = L-threonyl-tRNA(Thr) + AMP + diphosphate + H(+). Catalyzes the attachment of threonine to tRNA(Thr) in a two-step reaction: L-threonine is first activated by ATP to form Thr-AMP and then transferred to the acceptor end of tRNA(Thr). Also edits incorrectly charged L-seryl-tRNA(Thr). The polypeptide is Threonine--tRNA ligase (Thermofilum pendens (strain DSM 2475 / Hrk 5)).